A 414-amino-acid polypeptide reads, in one-letter code: MTTQRSPGLFRRLAHGSLVKQILVGLVLGILLAWISKPAAEAVGLLGTLFVGALKAVAPILVLMLVMASIANHQHGQKTNILPILFLYLLGTFSAALAAVVFSFAFPSTLHLSSSAGDISPPSGIVEVMRGLVMSMVSNPIDALLKGNYIGILVWAIGLGFALRHGNETTKNLVNDMSNAVTFMVKLVIRFAPIGIFGLVSSTLATTGFSTLWGYAQLLVVLVGCMLLVALVVNPLLVWWKIRRNPFPLVLLCLRESGVYAFFTRSSAANIPVNMALCEKLNLDRDTYSVSIPLGATINMAGAAITITVLTLAAVNTLGIPVDLPTALLLSVVASLCACGASGVAGGSLLLIPLACNMFGISNDIAMQVVAVGFIIGVLQDSCETALNSSTDVLFTAAACQAEDDRLANSALRN.

Topologically, residues 2 to 15 (TTQRSPGLFRRLAH) are cytoplasmic. A helical transmembrane segment spans residues 16–36 (GSLVKQILVGLVLGILLAWIS). Residues 37–45 (KPAAEAVGL) lie on the Periplasmic side of the membrane. The helical transmembrane segment at 46 to 66 (LGTLFVGALKAVAPILVLMLV) threads the bilayer. Over 67 to 83 (MASIANHQHGQKTNILP) the chain is Cytoplasmic. The chain crosses the membrane as a helical span at residues 84 to 104 (ILFLYLLGTFSAALAAVVFSF). At 105-142 (AFPSTLHLSSSAGDISPPSGIVEVMRGLVMSMVSNPID) the chain is on the periplasmic side. The helical transmembrane segment at 143-163 (ALLKGNYIGILVWAIGLGFAL) threads the bilayer. The Cytoplasmic segment spans residues 164–179 (RHGNETTKNLVNDMSN). Residues 180 to 200 (AVTFMVKLVIRFAPIGIFGLV) traverse the membrane as a helical segment. Topologically, residues 201-217 (SSTLATTGFSTLWGYAQ) are periplasmic. A helical transmembrane segment spans residues 218–238 (LLVVLVGCMLLVALVVNPLLV). The Cytoplasmic segment spans residues 239-299 (WWKIRRNPFP…VSIPLGATIN (61 aa)). The chain crosses the membrane as a helical span at residues 300-320 (MAGAAITITVLTLAAVNTLGI). The Periplasmic portion of the chain corresponds to 321–331 (PVDLPTALLLS). A helical membrane pass occupies residues 332 to 352 (VVASLCACGASGVAGGSLLLI). The Cytoplasmic segment spans residues 353–414 (PLACNMFGIS…DRLANSALRN (62 aa)).

The protein belongs to the dicarboxylate/amino acid:cation symporter (DAACS) (TC 2.A.23) family.

It localises to the cell inner membrane. The catalysed reaction is L-serine(in) + Na(+)(in) = L-serine(out) + Na(+)(out). It carries out the reaction L-threonine(in) + Na(+)(in) = L-threonine(out) + Na(+)(out). Its function is as follows. Involved in the import of serine and threonine into the cell, with the concomitant import of sodium (symport system). The polypeptide is Serine/threonine transporter SstT (Shigella dysenteriae serotype 1 (strain Sd197)).